The primary structure comprises 472 residues: Protein nucleotidyltransferase YdiU (472 aa).

Residues G86, G88, R89, K109, D121, G122, R172, and R179 each coordinate ATP. D244 (proton acceptor) is an active-site residue. Positions 245 and 254 each coordinate Mg(2+). An ATP-binding site is contributed by D254.

The protein belongs to the SELO family. It depends on Mg(2+) as a cofactor. Mn(2+) serves as cofactor.

The enzyme catalyses L-seryl-[protein] + ATP = 3-O-(5'-adenylyl)-L-seryl-[protein] + diphosphate. It carries out the reaction L-threonyl-[protein] + ATP = 3-O-(5'-adenylyl)-L-threonyl-[protein] + diphosphate. It catalyses the reaction L-tyrosyl-[protein] + ATP = O-(5'-adenylyl)-L-tyrosyl-[protein] + diphosphate. The catalysed reaction is L-histidyl-[protein] + UTP = N(tele)-(5'-uridylyl)-L-histidyl-[protein] + diphosphate. The enzyme catalyses L-seryl-[protein] + UTP = O-(5'-uridylyl)-L-seryl-[protein] + diphosphate. It carries out the reaction L-tyrosyl-[protein] + UTP = O-(5'-uridylyl)-L-tyrosyl-[protein] + diphosphate. Nucleotidyltransferase involved in the post-translational modification of proteins. It can catalyze the addition of adenosine monophosphate (AMP) or uridine monophosphate (UMP) to a protein, resulting in modifications known as AMPylation and UMPylation. The chain is Protein nucleotidyltransferase YdiU from Ruegeria sp. (strain TM1040) (Silicibacter sp.).